The sequence spans 192 residues: NADH dehydrogenase [ubiquinone] iron-sulfur protein 3 (192 aa).

The protein belongs to the complex I 30 kDa subunit family. Complex I is composed of about 45 different subunits. This is a component of the iron-sulfur (IP) fragment of the enzyme.

The protein localises to the mitochondrion inner membrane. It catalyses the reaction a ubiquinone + NADH + 5 H(+)(in) = a ubiquinol + NAD(+) + 4 H(+)(out). Core subunit of the mitochondrial membrane respiratory chain NADH dehydrogenase (Complex I) that is believed to belong to the minimal assembly required for catalysis. Complex I functions in the transfer of electrons from NADH to the respiratory chain. The immediate electron acceptor for the enzyme is believed to be ubiquinone. This chain is NADH dehydrogenase [ubiquinone] iron-sulfur protein 3 (NAD9), found in Beta trigyna (Caucasian wild beet).